The following is an 817-amino-acid chain: DNA gyrase subunit A (817 aa).

In terms of domain architecture, Topo IIA-type catalytic spans 39-505 (LPDARDGLKP…AVEDVSIEDL (467 aa)). Tyr-127 functions as the O-(5'-phospho-DNA)-tyrosine intermediate in the catalytic mechanism. Positions 532–538 (QGRGGKG) match the GyrA-box motif.

The protein belongs to the type II topoisomerase GyrA/ParC subunit family. In terms of assembly, heterotetramer, composed of two GyrA and two GyrB chains. In the heterotetramer, GyrA contains the active site tyrosine that forms a transient covalent intermediate with DNA, while GyrB binds cofactors and catalyzes ATP hydrolysis.

It is found in the cytoplasm. The catalysed reaction is ATP-dependent breakage, passage and rejoining of double-stranded DNA.. In terms of biological role, a type II topoisomerase that negatively supercoils closed circular double-stranded (ds) DNA in an ATP-dependent manner to modulate DNA topology and maintain chromosomes in an underwound state. Negative supercoiling favors strand separation, and DNA replication, transcription, recombination and repair, all of which involve strand separation. Also able to catalyze the interconversion of other topological isomers of dsDNA rings, including catenanes and knotted rings. Type II topoisomerases break and join 2 DNA strands simultaneously in an ATP-dependent manner. The chain is DNA gyrase subunit A from Aminobacterium colombiense (strain DSM 12261 / ALA-1).